A 405-amino-acid polypeptide reads, in one-letter code: Probable tRNA sulfurtransferase (405 aa).

In terms of domain architecture, THUMP spans D60 to T165. ATP-binding positions include M183 to L184, H208 to F209, R265, G287, and Q296.

It belongs to the ThiI family.

It localises to the cytoplasm. It catalyses the reaction [ThiI sulfur-carrier protein]-S-sulfanyl-L-cysteine + a uridine in tRNA + 2 reduced [2Fe-2S]-[ferredoxin] + ATP + H(+) = [ThiI sulfur-carrier protein]-L-cysteine + a 4-thiouridine in tRNA + 2 oxidized [2Fe-2S]-[ferredoxin] + AMP + diphosphate. It carries out the reaction [ThiS sulfur-carrier protein]-C-terminal Gly-Gly-AMP + S-sulfanyl-L-cysteinyl-[cysteine desulfurase] + AH2 = [ThiS sulfur-carrier protein]-C-terminal-Gly-aminoethanethioate + L-cysteinyl-[cysteine desulfurase] + A + AMP + 2 H(+). The protein operates within cofactor biosynthesis; thiamine diphosphate biosynthesis. Catalyzes the ATP-dependent transfer of a sulfur to tRNA to produce 4-thiouridine in position 8 of tRNAs, which functions as a near-UV photosensor. Also catalyzes the transfer of sulfur to the sulfur carrier protein ThiS, forming ThiS-thiocarboxylate. This is a step in the synthesis of thiazole, in the thiamine biosynthesis pathway. The sulfur is donated as persulfide by IscS. The sequence is that of Probable tRNA sulfurtransferase from Lacticaseibacillus casei (strain BL23) (Lactobacillus casei).